A 170-amino-acid chain; its full sequence is Gas vesicle protein A2 (170 aa).

Residues 86–170 are disordered; it reads SPMAKTVGRA…PRRRTEEEDR (85 aa). Composition is skewed to basic and acidic residues over residues 104-119 and 127-137; these read LTDKVRDVLTPEHEHE and DRPRAGAERGR. Positions 138 to 148 are enriched in basic residues; sequence STQRPRSRPAA. The segment covering 149-170 has biased composition (basic and acidic residues); sequence RPRDEDDRPRSRPRRRTEEEDR.

The protein belongs to the gas vesicle GvpA family. In terms of assembly, the gas vesicle shell is 2 nm thick and consists of a single layer of this protein. It forms helical ribs nearly perpendicular to the long axis of the vesicle.

The protein resides in the gas vesicle shell. Functionally, gas vesicles are hollow, gas filled proteinaceous nanostructures found in some microorganisms. During planktonic growth they allow positioning of the organism at a favorable depth for light or nutrient acquisition. GvpA forms the protein shell. It is not clear what function GVs perform in soil bacteria. The polypeptide is Gas vesicle protein A2 (Streptomyces coelicolor (strain ATCC BAA-471 / A3(2) / M145)).